Consider the following 1631-residue polypeptide: Ras GTPase-activating-like protein IQGAP3 (1631 aa).

One can recognise a Calponin-homology (CH) domain in the interval 34 to 149; it reads LCRLEEAKRW…YCIHALSLFL (116 aa). Tyr-162 carries the phosphotyrosine modification. Ser-539 bears the Phosphoserine mark. IQ domains are found at residues 730 to 759, 760 to 789, 790 to 819, and 820 to 849; these read NVGF…FLRT, WLPA…YFKA, NLDA…YFQK, and NVNS…APHP. Residues 1004–1253 enclose the Ras-GAP domain; sequence YLLLQLFKTA…LKFRKFIHRA (250 aa). Ser-1424 is subject to Phosphoserine.

This is Ras GTPase-activating-like protein IQGAP3 (IQGAP3) from Homo sapiens (Human).